The following is a 156-amino-acid chain: Cell division protein SepF (156 aa).

This sequence belongs to the SepF family. As to quaternary structure, homodimer. Interacts with FtsZ.

It localises to the cytoplasm. Its function is as follows. Cell division protein that is part of the divisome complex and is recruited early to the Z-ring. Probably stimulates Z-ring formation, perhaps through the cross-linking of FtsZ protofilaments. Its function overlaps with FtsA. The polypeptide is Cell division protein SepF (Ruminiclostridium cellulolyticum (strain ATCC 35319 / DSM 5812 / JCM 6584 / H10) (Clostridium cellulolyticum)).